A 553-amino-acid polypeptide reads, in one-letter code: MPTEPETDYDPELGRKFIFVTGGVMSGLGKGITAASTGRLLKNAGFDVTAVKIDPYLNVDAGTMNPFQHGEVYVLKDGGEVDLDLGNYERFLDIDMTFDHNVTTGKTYQHVIEKERSGDYLGRTVQIIPHITDDIKRRIREAAEGNDVCIIEVGGTVGDIEGMPYLEALRQFAHEEDEDDILFTHVTLVPYSKNGEQKTKPTQHSVKELRSIGLQPDILVGRCSDKLDIDTKEKIALFCDVPTEAVFSNPDVDDIYHVPLMVEEEGLDQYVMEELDIATEALPEDERENRWRDLVTQNTEGEVDIALVGKYDLEDAYMSVHEALKHAGLEKNVDVNVQWVNSEKMNDHHADRMREADAIVVPGGFGARGTEGKIEAIRYARENDIPFLGLCLGFQMAVVEYARNVLDLDDAHSAELDEDTPHPVIDILPEQYEIEDMGGTMRLGAHETEIDANTLAATLYGGESCTERHRHRYEVNPEYIDDLEAAGLKFSGYAENRMEILELAPEDHPYFIGTQFHPEFRSRPTRASPPFVGLLEAVLGDDPHTVTTEEVSH.

An amidoligase domain region spans residues 1 to 277; the sequence is MPTEPETDYD…DQYVMEELDI (277 aa). Ser26 serves as a coordination point for CTP. Ser26 lines the UTP pocket. Residues 27–32 and Asp84 contribute to the ATP site; that span reads GLGKGI. Residues Asp84 and Glu152 each contribute to the Mg(2+) site. Residues 159–161, 198–203, and Lys234 each bind CTP; these read DIE and KTKPTQ. Residues 198–203 and Lys234 contribute to the UTP site; that span reads KTKPTQ. ATP is bound at residue Val252. Residues 307–544 enclose the Glutamine amidotransferase type-1 domain; it reads LVGKYDLEDA…LEAVLGDDPH (238 aa). Gly364 is an L-glutamine binding site. Cys391 acts as the Nucleophile; for glutamine hydrolysis in catalysis. L-glutamine is bound by residues 392 to 395, Glu415, and Arg472; that span reads LGFQ. Active-site residues include His517 and Glu519.

Belongs to the CTP synthase family. As to quaternary structure, homotetramer.

Its subcellular location is the cytoplasm. The catalysed reaction is UTP + L-glutamine + ATP + H2O = CTP + L-glutamate + ADP + phosphate + 2 H(+). The enzyme catalyses L-glutamine + H2O = L-glutamate + NH4(+). It carries out the reaction UTP + NH4(+) + ATP = CTP + ADP + phosphate + 2 H(+). Its pathway is pyrimidine metabolism; CTP biosynthesis via de novo pathway; CTP from UDP: step 2/2. Its activity is regulated as follows. Allosterically activated by GTP, when glutamine is the substrate; GTP has no effect on the reaction when ammonia is the substrate. The allosteric effector GTP functions by stabilizing the protein conformation that binds the tetrahedral intermediate(s) formed during glutamine hydrolysis. Inhibited by the product CTP, via allosteric rather than competitive inhibition. Inhibited by 6-diazo-5-oxo-l-norleucine (DON). Functionally, catalyzes the ATP-dependent amination of UTP to CTP with either L-glutamine or ammonia as the source of nitrogen. Regulates intracellular CTP levels through interactions with the four ribonucleotide triphosphates. The protein is CTP synthase of Haloarcula hispanica (strain ATCC 33960 / DSM 4426 / JCM 8911 / NBRC 102182 / NCIMB 2187 / VKM B-1755).